The sequence spans 467 residues: Serine/threonine-protein kinase AFC1 (467 aa).

Positions 115-443 constitute a Protein kinase domain; sequence YQILSKMGEG…AREALNHPFF (329 aa). ATP-binding positions include 121-129 and Lys144; that span reads MGEGTFGQV. Asp240 acts as the Proton acceptor in catalysis. Residues 447–467 form a disordered region; it reads REQSIPPFNPNPHPFLYNQKN.

The protein belongs to the protein kinase superfamily. CMGC Ser/Thr protein kinase family. Lammer subfamily.

The enzyme catalyses L-seryl-[protein] + ATP = O-phospho-L-seryl-[protein] + ADP + H(+). It carries out the reaction L-threonyl-[protein] + ATP = O-phospho-L-threonyl-[protein] + ADP + H(+). It catalyses the reaction L-tyrosyl-[protein] + ATP = O-phospho-L-tyrosyl-[protein] + ADP + H(+). Its function is as follows. Activator of yeast transcription factor, STE12. The polypeptide is Serine/threonine-protein kinase AFC1 (AFC1) (Arabidopsis thaliana (Mouse-ear cress)).